A 203-amino-acid polypeptide reads, in one-letter code: Small ribosomal subunit protein uS5 (203 aa).

Positions 51–114 (LEDEVLDITM…ENAKLNVVRI (64 aa)) constitute an S5 DRBM domain.

It belongs to the universal ribosomal protein uS5 family. As to quaternary structure, part of the 30S ribosomal subunit. Contacts protein S4.

With S4 and S12 plays an important role in translational accuracy. The polypeptide is Small ribosomal subunit protein uS5 (Methanothrix thermoacetophila (strain DSM 6194 / JCM 14653 / NBRC 101360 / PT) (Methanosaeta thermophila)).